A 538-amino-acid polypeptide reads, in one-letter code: Putative outer membrane porin BglH (538 aa).

The N-terminal stretch at 1 to 25 is a signal peptide; sequence MFRRNLITSAILLMAPLAFSAQSLA. Positions 52 to 82 are disordered; it reads KDEEKKKYTPATVNRSVSTNDQGYAANPFPT. The span at 62–73 shows a compositional bias: polar residues; that stretch reads ATVNRSVSTNDQ.

The protein belongs to the porin LamB (TC 1.B.3) family.

The protein localises to the cell outer membrane. May be a sugar porin with a broad carbohydrate specificity. This Shigella sonnei (strain Ss046) protein is Putative outer membrane porin BglH (bglH).